A 3564-amino-acid polypeptide reads, in one-letter code: Sushi, von Willebrand factor type A, EGF and pentraxin domain-containing protein 1 (3564 aa).

Residues 1-17 form the signal peptide; that stretch reads MWTRLAFCCWALALVSG. In terms of domain architecture, VWFA spans 84–265; the sequence is ELVFLVDESS…LARRALHEDL (182 aa). A glycan (N-linked (GlcNAc...) asparagine) is linked at asparagine 187. 3 Sushi domains span residues 377–436, 437–496, and 497–561; these read VHCP…FCRV, RTCP…RCVE, and RHCA…VCKD. 6 disulfides stabilise this stretch: cysteine 379-cysteine 421, cysteine 407-cysteine 434, cysteine 439-cysteine 481, cysteine 467-cysteine 494, cysteine 499-cysteine 544, and cysteine 530-cysteine 559. 2 consecutive HYR domains span residues 560 to 644 and 645 to 724; these read KDVE…KVID and VEPP…VIKG. The 65-residue stretch at 725–789 folds into the Sushi 4 domain; the sequence is SPCEVPFTPV…YSTEWPDCAI (65 aa). 20 cysteine pairs are disulfide-bonded: cysteine 727–cysteine 769, cysteine 753–cysteine 787, cysteine 1192–cysteine 1203, cysteine 1197–cysteine 1212, cysteine 1214–cysteine 1223, cysteine 1230–cysteine 1241, cysteine 1235–cysteine 1250, cysteine 1252–cysteine 1261, cysteine 1268–cysteine 1279, cysteine 1273–cysteine 1288, cysteine 1290–cysteine 1299, cysteine 1306–cysteine 1317, cysteine 1311–cysteine 1326, cysteine 1328–cysteine 1337, cysteine 1344–cysteine 1355, cysteine 1349–cysteine 1364, cysteine 1366–cysteine 1375, cysteine 1382–cysteine 1393, cysteine 1387–cysteine 1402, and cysteine 1404–cysteine 1413. The 37-residue stretch at 1188 to 1224 folds into the EGF-like 1 domain; that stretch reads VFHECFLNPCHNSGTCQQLGRGYVCLCPPGYTGLKCE. One can recognise an EGF-like 2; calcium-binding domain in the interval 1226 to 1262; the sequence is DIDECSSLPCLNGGICRDKVGGFTCECSSGYTGQICE. Residues 1264–1300 enclose the EGF-like 3; calcium-binding domain; that stretch reads NINECSSSPCLNKGTCTDGLASYRCTCVSGYVGVHCE. The EGF-like 4; calcium-binding domain occupies 1302–1338; it reads DVNECQSSPCLNNAVCKDQVGGFSCKCPPGFLGTRCE. Residues 1340–1376 enclose the EGF-like 5; calcium-binding domain; it reads NVDECLSQPCQNGATCKDGANSFRCQCPAGFTGPHCE. The EGF-like 6; calcium-binding domain maps to 1378 to 1414; sequence NINECQSNPCRNQATCVDELNSYSCKCRPGFSGRRCE. The 205-residue stretch at 1419-1623 folds into the Pentraxin (PTX) domain; that stretch reads SGFNLDFEVS…VKVDSSSIFC (205 aa). Sushi domains follow at residues 1624 to 1682 and 1683 to 1740; these read SDCP…HCER and IRCG…SCLD. Cystine bridges form between cysteine 1626–cysteine 1667, cysteine 1653–cysteine 1680, cysteine 1685–cysteine 1725, cysteine 1711–cysteine 1738, cysteine 1744–cysteine 1756, cysteine 1750–cysteine 1765, cysteine 1767–cysteine 1778, cysteine 1784–cysteine 1824, cysteine 1810–cysteine 1837, cysteine 1842–cysteine 1882, cysteine 1868–cysteine 1895, cysteine 1900–cysteine 1940, cysteine 1926–cysteine 1953, cysteine 1958–cysteine 1998, cysteine 1984–cysteine 2011, cysteine 2016–cysteine 2056, cysteine 2042–cysteine 2073, cysteine 2078–cysteine 2121, cysteine 2107–cysteine 2136, cysteine 2141–cysteine 2181, cysteine 2167–cysteine 2194, cysteine 2199–cysteine 2240, cysteine 2226–cysteine 2254, cysteine 2259–cysteine 2299, cysteine 2285–cysteine 2313, cysteine 2318–cysteine 2358, cysteine 2344–cysteine 2371, cysteine 2376–cysteine 2417, cysteine 2403–cysteine 2430, cysteine 2435–cysteine 2475, cysteine 2461–cysteine 2488, cysteine 2493–cysteine 2533, cysteine 2519–cysteine 2546, cysteine 2551–cysteine 2591, and cysteine 2577–cysteine 2603. The EGF-like 7; calcium-binding domain occupies 1740 to 1779; sequence DVDECAVGSDCSEHASCLNTNGSYICSCKPPYTGDGKNCA. Asparagine 1760 carries N-linked (GlcNAc...) asparagine glycosylation. Sushi domains follow at residues 1776 to 1839, 1840 to 1897, 1898 to 1955, 1956 to 2013, 2014 to 2075, 2076 to 2138, 2139 to 2196, 2197 to 2256, 2257 to 2315, 2316 to 2373, 2374 to 2432, 2433 to 2490, 2491 to 2548, and 2549 to 2605; these read KNCA…SCEA, ISCG…VCEL, VKCS…SCQL, VSCG…QCLA, VSCD…RCIA, HFCE…QCIP, VRCG…TCHP, VSCN…SCTP, LNCG…KCVP, TKCA…VCKL, VLCQ…ECVP, VECP…MCRP, IECP…SCNA, and IHCS…TCVP. An important for the interaction with integrin ITGA9:ITGB1 region spans residues 2634 to 2641; that stretch reads DMMEVPYL. 14 consecutive Sushi domains span residues 2659–2708, 2709–2766, 2767–2824, 2825–2882, 2883–2940, 2941–2998, 2999–3054, 3055–3112, 3113–3171, 3172–3231, 3232–3289, 3290–3347, 3348–3406, and 3407–3463; these read EESL…SCIS, IECD…RCEV, ISCS…VCLP, VDCG…SCVP, VRCP…ICKP, ATCG…SCLP, CTCS…LCEH, ADCG…TCEP, VSCG…NCSP, KTCP…SCIP, VVCG…VCRE, SRCE…LCKP, NPCP…RCEK, and ISCG…ICRA. Intrachain disulfides connect cysteine 2679–cysteine 2706, cysteine 2711–cysteine 2751, cysteine 2737–cysteine 2764, cysteine 2769–cysteine 2809, cysteine 2795–cysteine 2822, cysteine 2827–cysteine 2867, cysteine 2853–cysteine 2880, cysteine 2885–cysteine 2925, cysteine 2911–cysteine 2938, cysteine 2943–cysteine 2983, cysteine 2969–cysteine 2996, cysteine 3001–cysteine 3040, cysteine 3026–cysteine 3052, cysteine 3057–cysteine 3097, cysteine 3083–cysteine 3110, cysteine 3115–cysteine 3156, cysteine 3141–cysteine 3169, cysteine 3174–cysteine 3214, cysteine 3200–cysteine 3229, cysteine 3234–cysteine 3274, cysteine 3260–cysteine 3287, cysteine 3292–cysteine 3332, cysteine 3318–cysteine 3345, cysteine 3350–cysteine 3391, cysteine 3377–cysteine 3404, cysteine 3409–cysteine 3449, cysteine 3435–cysteine 3461, cysteine 3497–cysteine 3507, cysteine 3501–cysteine 3513, cysteine 3515–cysteine 3524, cysteine 3529–cysteine 3539, cysteine 3533–cysteine 3545, and cysteine 3547–cysteine 3556. EGF-like domains lie at 3493-3525 and 3526-3557; these read EEPICILPCLNGGRCVAPYRCDCPAGWTGSRCH and TATCQSPCLNGGKCVRPNRCHCLSSWTGHDCS.

In terms of assembly, interacts (via Sushi domain 21) with ITGA9:ITGB1; thereby inhibits Ca(2+) intracellular signaling and as a result represses vasocontraction. Interacts (via Sushi domain 21) with ITGA4:ITGB1; thereby inhibits Ca(2+) intracellular signaling and as a result represses vasocontraction. Interacts with ANGPT1 and ANGPT2. Interacts with PEAR1 (via extracellular domain). Interacts with HSPG2, TLN1, FN1, COPA, CCT2, IQGAP1, LAMC1 and NID1. Interacts (via C-terminus) with TIE1.

It is found in the secreted. The protein localises to the nucleus. The protein resides in the cytoplasm. It localises to the membrane. Its function is as follows. Required for morphological development, cell alignment and migration of lymphatic endothelial cells during embryonic development, potentially via modulation of ANGPT2-TIE1 signaling and subsequent activation of FOXC2 transcription. Required for embryonic lymphatic vascular development, via mediating the correct formation of the first lymphovenous contact site and tight association of the lymphatic endothelium with the venous endothelium. Represses PRKCA-mediated L-type voltage-gated channel Ca(2+) influx and ROCK-mediated calcium sensitivity in vascular smooth muscle cells, via its interaction with integrins, thereby inhibiting vasocontraction. Promotes platelet activation, via its interaction with PEAR1 and subsequent activation of AKT/mTOR signaling. Plays a role in epidermal development and keratinocyte differentiation, independent of cell-cell adhesion. May play a role in initial cell attachment of stromal osteogenic cells. May promote myoblast cell adhesion when in the presence of integrin ITGA9:ITGB1. The sequence is that of Sushi, von Willebrand factor type A, EGF and pentraxin domain-containing protein 1 (Svep1) from Rattus norvegicus (Rat).